The sequence spans 653 residues: Transmembrane and coiled-coil domains protein 1 (653 aa).

Methionine 1 carries the N-acetylmethionine modification. Disordered stretches follow at residues 1-35, 58-78, 112-165, and 204-227; these read MEPS…QKLS, HQRR…ADPE, PPKM…APTS, and TSSA…TPDP. Residues 1 to 591 are Cytoplasmic-facing; that stretch reads MEPSGSEQLF…ARNLLGKLIN (591 aa). Positions 20–34 are enriched in basic and acidic residues; it reads QDAEARKQTESEQKL. Over residues 64–74 the composition is skewed to polar residues; it reads SVSPHDVQQIQ. Positions 113-125 are enriched in basic residues; the sequence is PKMKRGTSLHSRR. Residues 135-144 are compositionally biased toward polar residues; it reads PQINRKSGQE. The segment covering 153-165 has biased composition (low complexity); it reads RPRSSSTTDAPTS. Positions 204 to 218 are enriched in polar residues; it reads TSSAVASSTDGSIHT. The stretch at 228 to 313 forms a coiled coil; sequence QRTKAAIAHL…RKLREVEQNG (86 aa). Serine 382 and serine 414 each carry phosphoserine. Positions 415-437 are disordered; sequence PKYGSEEDCSSATSGSVGANSTT. Residues 424-437 are compositionally biased toward polar residues; that stretch reads SSATSGSVGANSTT. Residues 458–576 are a coiled coil; sequence GFDALLHEIQ…QQQQVVQLEG (119 aa). The next 2 membrane-spanning stretches (helical) occupy residues 592–612 and 625–645; these read ILLA…NCVV and LFLV…FSYV. Residues 646–653 are Cytoplasmic-facing; it reads ERFFSSPR.

The protein belongs to the TEX28 family. In terms of assembly, may form homodimers and heterodimers with TMCC2 or TMCC3 via the coiled-coil domains. Interacts with ribosomal proteins RPL4 and RPS6.

It localises to the endoplasmic reticulum membrane. Functionally, endoplasmic reticulum membrane protein that promotes endoplasmic reticulum-associated endosome fission. Localizes to contact sites between the endoplasmic reticulum and endosomes and acts by promoting recruitment of the endoplasmic reticulum to endosome tubules for fission. Endosome membrane fission of early and late endosomes is essential to separate regions destined for lysosomal degradation from carriers to be recycled to the plasma membrane. The chain is Transmembrane and coiled-coil domains protein 1 from Homo sapiens (Human).